A 185-amino-acid polypeptide reads, in one-letter code: Small ribosomal subunit protein uS5c (185 aa).

Residues phenylalanine 26 to isoleucine 89 form the S5 DRBM domain.

It belongs to the universal ribosomal protein uS5 family. As to quaternary structure, part of the 30S ribosomal subunit. Contacts protein S4.

It is found in the plastid. The protein resides in the chloroplast. Its function is as follows. With S4 and S12 plays an important role in translational accuracy. In Trieres chinensis (Marine centric diatom), this protein is Small ribosomal subunit protein uS5c (rps5).